Consider the following 486-residue polypeptide: Glutamate--tRNA ligase (486 aa).

The short motif at 11-21 (PSPTGLLHIGN) is the 'HIGH' region element. Positions 255 to 259 (KLSKR) match the 'KMSKS' region motif. Residue K258 coordinates ATP.

Belongs to the class-I aminoacyl-tRNA synthetase family. Glutamate--tRNA ligase type 1 subfamily. As to quaternary structure, monomer.

The protein localises to the cytoplasm. It catalyses the reaction tRNA(Glu) + L-glutamate + ATP = L-glutamyl-tRNA(Glu) + AMP + diphosphate. In terms of biological role, catalyzes the attachment of glutamate to tRNA(Glu) in a two-step reaction: glutamate is first activated by ATP to form Glu-AMP and then transferred to the acceptor end of tRNA(Glu). This chain is Glutamate--tRNA ligase, found in Streptococcus pneumoniae (strain ATCC BAA-255 / R6).